The chain runs to 572 residues: Proline--tRNA ligase (572 aa).

It belongs to the class-II aminoacyl-tRNA synthetase family. ProS type 1 subfamily. As to quaternary structure, homodimer.

The protein resides in the cytoplasm. It catalyses the reaction tRNA(Pro) + L-proline + ATP = L-prolyl-tRNA(Pro) + AMP + diphosphate. Its function is as follows. Catalyzes the attachment of proline to tRNA(Pro) in a two-step reaction: proline is first activated by ATP to form Pro-AMP and then transferred to the acceptor end of tRNA(Pro). As ProRS can inadvertently accommodate and process non-cognate amino acids such as alanine and cysteine, to avoid such errors it has two additional distinct editing activities against alanine. One activity is designated as 'pretransfer' editing and involves the tRNA(Pro)-independent hydrolysis of activated Ala-AMP. The other activity is designated 'posttransfer' editing and involves deacylation of mischarged Ala-tRNA(Pro). The misacylated Cys-tRNA(Pro) is not edited by ProRS. The polypeptide is Proline--tRNA ligase (Enterococcus faecalis (strain ATCC 700802 / V583)).